We begin with the raw amino-acid sequence, 468 residues long: ATP synthase subunit beta 2 (468 aa).

155–162 (GGAGVGKT) lines the ATP pocket.

The protein belongs to the ATPase alpha/beta chains family. In terms of assembly, F-type ATPases have 2 components, CF(1) - the catalytic core - and CF(0) - the membrane proton channel. CF(1) has five subunits: alpha(3), beta(3), gamma(1), delta(1), epsilon(1). CF(0) has four main subunits: a(1), b(1), b'(1) and c(9-12).

It localises to the cell inner membrane. The catalysed reaction is ATP + H2O + 4 H(+)(in) = ADP + phosphate + 5 H(+)(out). Produces ATP from ADP in the presence of a proton gradient across the membrane. The catalytic sites are hosted primarily by the beta subunits. This Chlorobium luteolum (strain DSM 273 / BCRC 81028 / 2530) (Pelodictyon luteolum) protein is ATP synthase subunit beta 2.